Consider the following 357-residue polypeptide: Glutamine synthetase root isozyme 1 (357 aa).

A GS beta-grasp domain is found at 19–99; that stretch reads IIAEYIWIGG…VMCDCYTPQG (81 aa). Positions 106–357 constitute a GS catalytic domain; sequence KRYSAAKVFS…AETTILWNGN (252 aa).

Belongs to the glutamine synthetase family. As to quaternary structure, homooctamer. In terms of tissue distribution, found mainly in the cortical tissues of seedling roots, and in the root tip.

Its subcellular location is the cytoplasm. The enzyme catalyses L-glutamate + NH4(+) + ATP = L-glutamine + ADP + phosphate + H(+). Functionally, plays a role in the flow of nitrogen into nitrogenous organic compounds. The protein is Glutamine synthetase root isozyme 1 (GLN6) of Zea mays (Maize).